A 2161-amino-acid polypeptide reads, in one-letter code: MMMMMMMKKMQHQRQQQADHANEANYARGTRLPLSGEGPTSQPNSSKQTVLSWQAAIDAARQAKAAQTMSTSAPPPVGSLSQRKRQQYAKSKKQGNSSNSRPARALFCLSLNNPIRRACISIVEWKPFDIFILLAIFANCVALAIYIPFPEDDSNSTNHNLEKVEYAFLIIFTVETFLKIIAYGLLLHPNAYVRNGWNLLDFVIVIVGLFSVILEQLTKETEGGNHSSGKSGGFDVKALRAFRVLRPLRLVSGVPSLQVVLNSIIKAMVPLLHIALLVLFVIIIYAIIGLELFIGKMHKTCFFADSDIVAEEDPAPCAFSGNGRQCTANGTECRSGWVGPNGGITNFDNFAFAMLTVFQCITMEGWTDVLYWMNDAMGFELPWVYFVSLVIFGSFFVLNLVLGVLSGEFSKEREKAKARGDFQKLREKQQLEEDLKGYLDWITQAEDIDPENEEEGGEEGKRNTSMPTSETESVNTENVSGEGENRGCCGSLCQAISKSKLSRRWRRWNRFNRRRCRAAVKSVTFYWLVIVLVFLNTLTISSEHYNQPDWLTQIQDIANKVLLALFTCEMLVKMYSLGLQAYFVSLFNRFDCFVVCGGITETILVELEIMSPLGISVFRCVRLLRIFKVTRHWTSLSNLVASLLNSMKSIASLLLLLFLFIIIFSLLGMQLFGGKFNFDETQTKRSTFDNFPQALLTVFQILTGEDWNAVMYDGIMAYGGPSSSGMIVCIYFIILFICGNYILLNVFLAIAVDNLADAESLNTAQKEEAEEKERKKIARKESLENKKNNKPEVNQIANSDNKVTIDDYREEDEDKDPYPPCDVPVGEEEEEEEEDEPEVPAGPRPRRISELNMKEKIAPIPEGSAFFILSKTNPIRVGCHKLINHHIFTNLILVFIMLSSAALAAEDPIRSHSFRNTILGYFDYAFTAIFTVEILLKMTTFGAFLHKGAFCRNYFNLLDMLVVGVSLVSFGIQSSAISVVKILRVLRVLRPLRAINRAKGLKHVVQCVFVAIRTIGNIMIVTTLLQFMFACIGVQLFKGKFYRCTDEAKSNPEECRGLFILYKDGDVDSPVVRERIWQNSDFNFDNVLSAMMALFTVSTFEGWPALLYKAIDSNGENIGPIYNHRVEISIFFIIYIIIVAFFMMNIFVGFVIVTFQEQGEKEYKNCELDKNQRQCVEYALKARPLRRYIPKNPYQYKFWYVVNSSPFEYMMFVLIMLNTLCLAMQHYEQSKMFNDAMDILNMVFTGVFTVEMVLKVIAFKPKGYFSDAWNTFDSLIVIGSIIDVALSEADPTESENVPVPTATPGNSEESNRISITFFRLFRVMRLVKLLSRGEGIRTLLWTFIKSFQALPYVALLIAMLFFIYAVIGMQMFGKVAMRDNNQINRNNNFQTFPQAVLLLFRCATGEAWQEIMLACLPGKLCDPESDYNPGEEYTCGSNFAIVYFISFYMLCAFLIINLFVAVIMDNFDYLTRDWSILGPHHLDEFKRIWSEYDPEAKGRIKHLDVVTLLRRIQPPLGFGKLCPHRVACKRLVAMNMPLNSDGTVMFNATLFALVRTALKIKTEGNLEQANEELRAVIKKIWKKTSMKLLDQVVPPAGDDEVTVGKFYATFLIQDYFRKFKKRKEQGLVGKYPAKNTTIALQAGLRTLHDIGPEIRRAISCDLQDDEPEETKREEEDDVFKRNGALLGNHVNHVNSDRRDSLQQTNTTHRPLHVQRPSIPPASDTEKPLFPPAGNSVCHNHHNHNSIGKQVPTSTNANLNNANMSKAAHGKRPSIGNLEHVSENGHHSSHKHDREPQRRSSVKRTRYYETYIRSDSGDEQLPTICREDPEIHGYFRDPHCLGEQEYFSSEECYEDDSSPTWSRQNYGYYSRYPGRNIDSERPRGYHHPQGFLEDDDSPVCYDSRRSPRRRLLPPTPASHRRSSFNFECLRRQSSQEEVPSSPIFPHRTALPLHLMQQQIMAVAGLDSSKAQKYSPSHSTRSWATPPATPPYRDWTPCYTPLIQVEQSEALDQVNGSLPSLHRSSWYTDEPDISYRTFTPASLTVPSSFRNKNSDKQRSADSLVEAVLISEGLGRYARDPKFVSATKHEIADACDLTIDEMESAASTLLNGNVRPRANGDVGPLSHRQDYELQDFGPGYSDEEPDPGRDEEDLADEMICITTL.

3 disordered regions span residues 1 to 21 (MMMM…ADHA), 30 to 49 (TRLP…SKQT), and 64 to 100 (KAAQ…SSNS). Over 1-126 (MMMMMMMKKM…RACISIVEWK (126 aa)) the chain is Cytoplasmic. Polar residues predominate over residues 38 to 49 (GPTSQPNSSKQT). Residues 82–93 (QRKRQQYAKSKK) show a composition bias toward basic residues. One copy of the I repeat lies at 113-409 (NPIRRACISI…LVLGVLSGEF (297 aa)). Residues 127–145 (PFDIFILLAIFANCVALAI) traverse the membrane as a helical segment. Residues 146-163 (YIPFPEDDSNSTNHNLEK) lie on the Extracellular side of the membrane. An N-linked (GlcNAc...) asparagine glycan is attached at Asn-155. A helical membrane pass occupies residues 164-183 (VEYAFLIIFTVETFLKIIAY). The Cytoplasmic segment spans residues 184–195 (GLLLHPNAYVRN). A helical transmembrane segment spans residues 196-214 (GWNLLDFVIVIVGLFSVIL). Over 215–235 (EQLTKETEGGNHSSGKSGGFD) the chain is Extracellular. Asn-225 carries an N-linked (GlcNAc...) asparagine glycan. Residues 236 to 254 (VKALRAFRVLRPLRLVSGV) traverse the membrane as a helical segment. The Cytoplasmic portion of the chain corresponds to 255-273 (PSLQVVLNSIIKAMVPLLH). Residues 274–293 (IALLVLFVIIIYAIIGLELF) form a helical membrane-spanning segment. Residues 294–381 (IGKMHKTCFF…WMNDAMGFEL (88 aa)) are Extracellular-facing. A glycan (N-linked (GlcNAc...) asparagine) is linked at Asn-329. Glu-364 is a Ca(2+) binding site. Residues 382 to 406 (PWVYFVSLVIFGSFFVLNLVLGVLS) traverse the membrane as a helical segment. The Cytoplasmic portion of the chain corresponds to 407 to 523 (GEFSKEREKA…RRCRAAVKSV (117 aa)). Positions 429–446 (QQLEEDLKGYLDWITQAE) are binding to the beta subunit. Residues 449-482 (DPENEEEGGEEGKRNTSMPTSETESVNTENVSGE) form a disordered region. Over residues 463–479 (NTSMPTSETESVNTENV) the composition is skewed to polar residues. The stretch at 509 to 755 (NRFNRRRCRA…VFLAIAVDNL (247 aa)) is one II repeat. Residues 524–543 (TFYWLVIVLVFLNTLTISSE) traverse the membrane as a helical segment. The Extracellular portion of the chain corresponds to 544–558 (HYNQPDWLTQIQDIA). The helical transmembrane segment at 559 to 577 (NKVLLALFTCEMLVKMYSL) threads the bilayer. Topologically, residues 578-585 (GLQAYFVS) are cytoplasmic. Residues 586 to 604 (LFNRFDCFVVCGGITETIL) form a helical membrane-spanning segment. Residues 605–614 (VELEIMSPLG) are Extracellular-facing. A helical membrane pass occupies residues 615-633 (ISVFRCVRLLRIFKVTRHW). The Cytoplasmic portion of the chain corresponds to 634-652 (TSLSNLVASLLNSMKSIAS). Residues 653–673 (LLLLLFLFIIIFSLLGMQLFG) traverse the membrane as a helical segment. Over 674-727 (GKFNFDETQTKRSTFDNFPQALLTVFQILTGEDWNAVMYDGIMAYGGPSSSGMI) the chain is Extracellular. Glu-705 is a binding site for Ca(2+). The chain crosses the membrane as a helical span at residues 728-752 (VCIYFIILFICGNYILLNVFLAIAV). Residues 753 to 886 (DNLADAESLN…VGCHKLINHH (134 aa)) are Cytoplasmic-facing. Positions 766-790 (KEEAEEKERKKIARKESLENKKNNK) are enriched in basic and acidic residues. The disordered stretch occupies residues 766 to 850 (KEEAEEKERK…AGPRPRRISE (85 aa)). Polar residues predominate over residues 791–802 (PEVNQIANSDNK). Over residues 825-838 (VGEEEEEEEEDEPE) the composition is skewed to acidic residues. The stretch at 873-1155 (NPIRVGCHKL…IFVGFVIVTF (283 aa)) is one III repeat. A helical transmembrane segment spans residues 887–905 (IFTNLILVFIMLSSAALAA). Residues 906 to 921 (EDPIRSHSFRNTILGY) lie on the Extracellular side of the membrane. Residues 922-941 (FDYAFTAIFTVEILLKMTTF) traverse the membrane as a helical segment. The Cytoplasmic portion of the chain corresponds to 942-953 (GAFLHKGAFCRN). A helical transmembrane segment spans residues 954–972 (YFNLLDMLVVGVSLVSFGI). Residues 973-978 (QSSAIS) are Extracellular-facing. Residues 979-998 (VVKILRVLRVLRPLRAINRA) traverse the membrane as a helical segment. The Cytoplasmic segment spans residues 999-1017 (KGLKHVVQCVFVAIRTIGN). The chain crosses the membrane as a helical span at residues 1018-1037 (IMIVTTLLQFMFACIGVQLF). Residues 1038–1127 (KGKFYRCTDE…IGPIYNHRVE (90 aa)) are Extracellular-facing. The segment at 1075–1165 (RIWQNSDFNF…QEQGEKEYKN (91 aa)) is dihydropyridine binding. Residue Glu-1101 participates in Ca(2+) binding. Residues 1128–1148 (ISIFFIIYIIIVAFFMMNIFV) traverse the membrane as a helical segment. Topologically, residues 1149–1205 (GFVIVTFQEQGEKEYKNCELDKNQRQCVEYALKARPLRRYIPKNPYQYKFWYVVNSS) are cytoplasmic. The stretch at 1192 to 1467 (NPYQYKFWYV…LFVAVIMDNF (276 aa)) is one IV repeat. The chain crosses the membrane as a helical span at residues 1206–1224 (PFEYMMFVLIMLNTLCLAM). The Extracellular portion of the chain corresponds to 1225 to 1239 (QHYEQSKMFNDAMDI). Residues 1240–1259 (LNMVFTGVFTVEMVLKVIAF) traverse the membrane as a helical segment. The Cytoplasmic portion of the chain corresponds to 1260-1266 (KPKGYFS). The helical transmembrane segment at 1267–1288 (DAWNTFDSLIVIGSIIDVALSE) threads the bilayer. Topologically, residues 1289–1313 (ADPTESENVPVPTATPGNSEESNRI) are extracellular. A helical membrane pass occupies residues 1314-1333 (SITFFRLFRVMRLVKLLSRG). At 1334 to 1352 (EGIRTLLWTFIKSFQALPY) the chain is on the cytoplasmic side. Residues 1353–1372 (VALLIAMLFFIYAVIGMQMF) traverse the membrane as a helical segment. The Extracellular portion of the chain corresponds to 1373–1439 (GKVAMRDNNQ…GEEYTCGSNF (67 aa)). The tract at residues 1420 to 1486 (LCDPESDYNP…LGPHHLDEFK (67 aa)) is dihydropyridine binding. The interval 1432 to 1475 (EYTCGSNFAIVYFISFYMLCAFLIINLFVAVIMDNFDYLTRDWS) is phenylalkylamine binding. Residues 1440–1464 (AIVYFISFYMLCAFLIINLFVAVIM) form a helical membrane-spanning segment. The Cytoplasmic portion of the chain corresponds to 1465–2161 (DNFDYLTRDW…ADEMICITTL (697 aa)). Disordered stretches follow at residues 1659–1678 (SCDL…EDDV), 1684–1804 (ALLG…VKRT), 1872–1919 (PGRN…ASHR), and 2108–2152 (NGNV…EDLA). The span at 1745-1763 (SIGKQVPTSTNANLNNANM) shows a compositional bias: polar residues. The segment covering 1779–1797 (HVSENGHHSSHKHDREPQR) has biased composition (basic and acidic residues). Residues 2138 to 2152 (SDEEPDPGRDEEDLA) show a composition bias toward acidic residues.

Belongs to the calcium channel alpha-1 subunit (TC 1.A.1.11) family. CACNA1D subfamily. In terms of assembly, voltage-dependent calcium channels are multisubunit complexes, consisting of alpha-1, alpha-2, beta and delta subunits in a 1:1:1:1 ratio. The channel activity is directed by the pore-forming and voltage-sensitive alpha-1 subunit. In many cases, this subunit is sufficient to generate voltage-sensitive calcium channel activity. The auxiliary subunits beta and alpha-2/delta linked by a disulfide bridge regulate the channel activity. Channel activity is further modulated, depending on the presence of specific delta subunit isoforms. Interacts (via IQ domain) with CABP1 and CABP4 in a calcium independent manner. Interacts with RIMBP2. As to expression, expressed in pancreatic islets and in brain, where it has been seen in cerebral cortex, hippocampus, basal ganglia, habenula and thalamus. Expressed in the small cell lung carcinoma cell line SCC-9. No expression in skeletal muscle.

The protein localises to the membrane. It carries out the reaction Ca(2+)(in) = Ca(2+)(out). In terms of biological role, voltage-sensitive calcium channels (VSCC) mediate the entry of calcium ions into excitable cells and are also involved in a variety of calcium-dependent processes, including muscle contraction, hormone or neurotransmitter release, gene expression, cell motility, cell division and cell death. The isoform alpha-1D gives rise to L-type calcium currents. Long-lasting (L-type) calcium channels belong to the 'high-voltage activated' (HVA) group. They are blocked by dihydropyridines (DHP), phenylalkylamines, and by benzothiazepines. Functionally, voltage-sensitive calcium channels (VSCC) mediate the entry of calcium ions into excitable cells and are also involved in a variety of calcium-dependent processes, including muscle contraction, hormone or neurotransmitter release, gene expression, cell motility, cell division and cell death. The isoform alpha-1D gives rise to L-type calcium currents. This chain is Voltage-dependent L-type calcium channel subunit alpha-1D (CACNA1D), found in Homo sapiens (Human).